The primary structure comprises 169 residues: Large ribosomal subunit protein uL10 (169 aa).

It belongs to the universal ribosomal protein uL10 family. Part of the ribosomal stalk of the 50S ribosomal subunit. The N-terminus interacts with L11 and the large rRNA to form the base of the stalk. The C-terminus forms an elongated spine to which L12 dimers bind in a sequential fashion forming a multimeric L10(L12)X complex.

Forms part of the ribosomal stalk, playing a central role in the interaction of the ribosome with GTP-bound translation factors. The chain is Large ribosomal subunit protein uL10 from Rickettsia peacockii (strain Rustic).